The following is a 445-amino-acid chain: Anthranilate N-benzoyltransferase protein 1 (445 aa).

Catalysis depends on proton acceptor residues H164 and D392.

Belongs to the plant acyltransferase family. N-terminus is blocked.

It carries out the reaction anthranilate + benzoyl-CoA = N-benzoylanthranilate + CoA. It functions in the pathway phytoalexin biosynthesis; methoxydianthramide B biosynthesis. Its function is as follows. Catalyzes the formation of N-benzoylanthranilate, in the course of methoxydianthramide B, a phytoalexin. Phytoalexins are produced in response to infection by parasites, and are essential for the expression of disease resistance. This Dianthus caryophyllus (Carnation) protein is Anthranilate N-benzoyltransferase protein 1 (HCBT1).